A 443-amino-acid chain; its full sequence is MIAAPFDAVADSTGKKPFYSHLYVQVLAAIAAGILLGHFYPELGAQLKPLGDAFIKLVKMIIAPVIFLTVATGIAGMSDLKKVGRVAGKAMLYFLTFSTLALVIGMVVANVVQPGAGMNIDPASLDPTAVATYASKAHEQSIVGFLTNIIPTTIVGAFADGDILQVLFFSVLFGIALAMVGEKGEQVVNFLNALTAPVFKLVAILMKAAPIGAFGAMAFTIGKYGIGSIANLAMLIGTFYLTSLLFVLVVLGAVARYNGFSILALLRYIKEELLLVLGTSSSEAALPGLMNKMEKAGCKRSVVGLVIPTGYSFNLDGTNIYMTLAALFIAQATGINLSWGDQILLLLVAMLSSKGAAGITGAGFITLAATLSVVPSVPVAGMALILGIDRFMSECRALTNLVGNAVATIVVARWENELDTAQLARALGGQAEESAPAGLQPAE.

9 helical membrane passes run 17-37, 57-77, 92-112, 139-159, 161-181, 201-221, 234-254, 320-340, and 368-388; these read PFYS…ILLG, LVKM…IAGM, LYFL…ANVV, EQSI…GAFA, GDIL…AMVG, LVAI…AFTI, MLIG…LGAV, IYMT…LSWG, and AATL…ILGI.

Belongs to the dicarboxylate/amino acid:cation symporter (DAACS) (TC 2.A.23) family.

The protein resides in the cell inner membrane. Functionally, responsible for the transport of dicarboxylates such as succinate, fumarate, and malate from the periplasm across the membrane. The sequence is that of C4-dicarboxylate transport protein from Rhizobium leguminosarum bv. trifolii (strain WSM2304).